A 91-amino-acid chain; its full sequence is Long neurotoxin OH-37 (91 aa).

The first 21 residues, 1-21 (MKTLLLTLVVMTIVCLDLGYS), serve as a signal peptide directing secretion. Cystine bridges form between cysteine 24–cysteine 41, cysteine 34–cysteine 62, cysteine 47–cysteine 51, cysteine 66–cysteine 77, and cysteine 78–cysteine 83.

This sequence belongs to the three-finger toxin family. Long-chain subfamily. Type II alpha-neurotoxin sub-subfamily. As to expression, expressed by the venom gland.

It is found in the secreted. In terms of biological role, binds with high affinity to muscular (alpha-1/CHRNA1) and neuronal (alpha-7/CHRNA7) nicotinic acetylcholine receptor (nAChR) and inhibits acetylcholine from binding to the receptor, thereby impairing neuromuscular and neuronal transmission. The chain is Long neurotoxin OH-37 from Ophiophagus hannah (King cobra).